A 337-amino-acid chain; its full sequence is Ketol-acid reductoisomerase (NADP(+)) (337 aa).

The KARI N-terminal Rossmann domain occupies Leu-3–Thr-183. NADP(+)-binding positions include Tyr-26–Gln-29, Lys-49, Ser-52, Ser-54, and Asp-84–Gln-87. The active site involves His-109. Residue Gly-135 coordinates NADP(+). Residues Thr-184–Val-329 form the KARI C-terminal knotted domain. Mg(2+) is bound by residues Asp-192, Glu-196, Glu-228, and Glu-232. Substrate is bound at residue Ser-253.

This sequence belongs to the ketol-acid reductoisomerase family. It depends on Mg(2+) as a cofactor.

The enzyme catalyses (2R)-2,3-dihydroxy-3-methylbutanoate + NADP(+) = (2S)-2-acetolactate + NADPH + H(+). It carries out the reaction (2R,3R)-2,3-dihydroxy-3-methylpentanoate + NADP(+) = (S)-2-ethyl-2-hydroxy-3-oxobutanoate + NADPH + H(+). It participates in amino-acid biosynthesis; L-isoleucine biosynthesis; L-isoleucine from 2-oxobutanoate: step 2/4. Its pathway is amino-acid biosynthesis; L-valine biosynthesis; L-valine from pyruvate: step 2/4. Its function is as follows. Involved in the biosynthesis of branched-chain amino acids (BCAA). Catalyzes an alkyl-migration followed by a ketol-acid reduction of (S)-2-acetolactate (S2AL) to yield (R)-2,3-dihydroxy-isovalerate. In the isomerase reaction, S2AL is rearranged via a Mg-dependent methyl migration to produce 3-hydroxy-3-methyl-2-ketobutyrate (HMKB). In the reductase reaction, this 2-ketoacid undergoes a metal-dependent reduction by NADPH to yield (R)-2,3-dihydroxy-isovalerate. In Mycobacterium bovis (strain BCG / Pasteur 1173P2), this protein is Ketol-acid reductoisomerase (NADP(+)).